The sequence spans 101 residues: MEMLLFLNESYIFHRFRMWSIVLWHSCVFVCAECGNAYYRGAGGCLEKPFCAPVKFPFSVKKNIRILDLDPRSEAYCLSHHLVCPKRFPCKATSLLLIPEG.

The protein belongs to the UPF0377 family.

This is Putative UPF0377 protein YBL108W from Saccharomyces cerevisiae (strain ATCC 204508 / S288c) (Baker's yeast).